Consider the following 131-residue polypeptide: Holo-[acyl-carrier-protein] synthase (131 aa).

Asp-8 and Glu-59 together coordinate Mg(2+).

Belongs to the P-Pant transferase superfamily. AcpS family. Mg(2+) is required as a cofactor.

The protein resides in the cytoplasm. The catalysed reaction is apo-[ACP] + CoA = holo-[ACP] + adenosine 3',5'-bisphosphate + H(+). Functionally, transfers the 4'-phosphopantetheine moiety from coenzyme A to a Ser of acyl-carrier-protein. This Rickettsia rickettsii (strain Iowa) protein is Holo-[acyl-carrier-protein] synthase.